A 248-amino-acid chain; its full sequence is 2,3-bisphosphoglycerate-dependent phosphoglycerate mutase (248 aa).

Residues 8–15 (RHGESEWN), 21–22 (TG), Arg60, 87–90 (ERHY), Lys98, 114–115 (RR), and 183–184 (GN) contribute to the substrate site. His9 functions as the Tele-phosphohistidine intermediate in the catalytic mechanism. Catalysis depends on Glu87, which acts as the Proton donor/acceptor.

The protein belongs to the phosphoglycerate mutase family. BPG-dependent PGAM subfamily.

It catalyses the reaction (2R)-2-phosphoglycerate = (2R)-3-phosphoglycerate. Its pathway is carbohydrate degradation; glycolysis; pyruvate from D-glyceraldehyde 3-phosphate: step 3/5. Functionally, catalyzes the interconversion of 2-phosphoglycerate and 3-phosphoglycerate. The sequence is that of 2,3-bisphosphoglycerate-dependent phosphoglycerate mutase from Borreliella burgdorferi (strain ATCC 35210 / DSM 4680 / CIP 102532 / B31) (Borrelia burgdorferi).